We begin with the raw amino-acid sequence, 906 residues long: Valine--tRNA ligase (906 aa).

The 'HIGH' region motif lies at 43–53; that stretch reads PNVTGSLHIGH. A 'KMSKS' region motif is present at residues 548 to 552; it reads KMSKS. Lysine 551 is a binding site for ATP. A coiled-coil region spans residues 842–905; it reads EKARLTKDIA…EAALSRLASV (64 aa).

Belongs to the class-I aminoacyl-tRNA synthetase family. ValS type 1 subfamily. Monomer.

It localises to the cytoplasm. It catalyses the reaction tRNA(Val) + L-valine + ATP = L-valyl-tRNA(Val) + AMP + diphosphate. Functionally, catalyzes the attachment of valine to tRNA(Val). As ValRS can inadvertently accommodate and process structurally similar amino acids such as threonine, to avoid such errors, it has a 'posttransfer' editing activity that hydrolyzes mischarged Thr-tRNA(Val) in a tRNA-dependent manner. The polypeptide is Valine--tRNA ligase (Caulobacter vibrioides (strain ATCC 19089 / CIP 103742 / CB 15) (Caulobacter crescentus)).